Reading from the N-terminus, the 266-residue chain is Methyl-coenzyme M reductase II subunit gamma (266 aa).

R123 contacts coenzyme M.

This sequence belongs to the methyl-coenzyme M reductase gamma subunit family. As to quaternary structure, MCR is a hexamer of two alpha, two beta, and two gamma chains, forming a dimer of heterotrimers. Coenzyme F430 is required as a cofactor.

The catalysed reaction is coenzyme B + methyl-coenzyme M = methane + coenzyme M-coenzyme B heterodisulfide. It participates in one-carbon metabolism; methyl-coenzyme M reduction; methane from methyl-coenzyme M: step 1/1. Component of the methyl-coenzyme M reductase (MCR) I that catalyzes the reductive cleavage of methyl-coenzyme M (CoM-S-CH3 or 2-(methylthio)ethanesulfonate) using coenzyme B (CoB or 7-mercaptoheptanoylthreonine phosphate) as reductant which results in the production of methane and the mixed heterodisulfide of CoB and CoM (CoM-S-S-CoB). This is the final step in methanogenesis. The chain is Methyl-coenzyme M reductase II subunit gamma (mrtG) from Methanocaldococcus jannaschii (strain ATCC 43067 / DSM 2661 / JAL-1 / JCM 10045 / NBRC 100440) (Methanococcus jannaschii).